We begin with the raw amino-acid sequence, 292 residues long: Seed lectin (292 aa).

A signal peptide spans 1-37 (MATSNSRPHLLQTHKPFSVVLAISITFFLLLLNKVNS). 2 N-linked (GlcNAc...) asparagine glycosylation sites follow: Asn-82 and Asn-154. Residues Asp-163 and Asp-165 each coordinate Mn(2+). Residues Asp-165, His-167, Asn-169, and Asp-172 each contribute to the Ca(2+) site. 2 residues coordinate Mn(2+): Asp-172 and His-177. Residue Asn-186 is glycosylated (N-linked (GlcNAc...) asparagine).

This sequence belongs to the leguminous lectin family.

In terms of biological role, mannose/glucose-specific lectin. This chain is Seed lectin, found in Styphnolobium japonicum (Japanese pagoda tree).